Reading from the N-terminus, the 286-residue chain is Bifunctional protein FolD (286 aa).

NADP(+) is bound by residues 166–168 and isoleucine 232; that span reads GAS.

Belongs to the tetrahydrofolate dehydrogenase/cyclohydrolase family. Homodimer.

It carries out the reaction (6R)-5,10-methylene-5,6,7,8-tetrahydrofolate + NADP(+) = (6R)-5,10-methenyltetrahydrofolate + NADPH. The catalysed reaction is (6R)-5,10-methenyltetrahydrofolate + H2O = (6R)-10-formyltetrahydrofolate + H(+). It participates in one-carbon metabolism; tetrahydrofolate interconversion. Its function is as follows. Catalyzes the oxidation of 5,10-methylenetetrahydrofolate to 5,10-methenyltetrahydrofolate and then the hydrolysis of 5,10-methenyltetrahydrofolate to 10-formyltetrahydrofolate. This Shewanella denitrificans (strain OS217 / ATCC BAA-1090 / DSM 15013) protein is Bifunctional protein FolD.